The sequence spans 202 residues: Thymidylate kinase (202 aa).

13-20 (GTDGAGKS) is a binding site for ATP.

This sequence belongs to the thymidylate kinase family.

The enzyme catalyses dTMP + ATP = dTDP + ADP. Phosphorylation of dTMP to form dTDP in both de novo and salvage pathways of dTTP synthesis. This chain is Thymidylate kinase, found in Desulfotalea psychrophila (strain LSv54 / DSM 12343).